Here is a 273-residue protein sequence, read N- to C-terminus: Large ribosomal subunit protein uL2 (273 aa).

The tract at residues 221–273 is disordered; that stretch reads RGTAMNPVDHPHGGGEGRNFGKHPVTPWGVQTKGKKTRHNKRTDKFIVRRRGK. A compositionally biased stretch (basic residues) spans 253 to 273; it reads KGKKTRHNKRTDKFIVRRRGK.

This sequence belongs to the universal ribosomal protein uL2 family. Part of the 50S ribosomal subunit. Forms a bridge to the 30S subunit in the 70S ribosome.

Its function is as follows. One of the primary rRNA binding proteins. Required for association of the 30S and 50S subunits to form the 70S ribosome, for tRNA binding and peptide bond formation. It has been suggested to have peptidyltransferase activity; this is somewhat controversial. Makes several contacts with the 16S rRNA in the 70S ribosome. The sequence is that of Large ribosomal subunit protein uL2 from Glaesserella parasuis serovar 5 (strain SH0165) (Haemophilus parasuis).